Here is a 311-residue protein sequence, read N- to C-terminus: tRNA dimethylallyltransferase (311 aa).

8–15 (GPTGVGKS) lines the ATP pocket. 10-15 (TGVGKS) is a binding site for substrate.

This sequence belongs to the IPP transferase family. In terms of assembly, monomer. Mg(2+) serves as cofactor.

It catalyses the reaction adenosine(37) in tRNA + dimethylallyl diphosphate = N(6)-dimethylallyladenosine(37) in tRNA + diphosphate. Its function is as follows. Catalyzes the transfer of a dimethylallyl group onto the adenine at position 37 in tRNAs that read codons beginning with uridine, leading to the formation of N6-(dimethylallyl)adenosine (i(6)A). The chain is tRNA dimethylallyltransferase from Mycobacterium leprae (strain Br4923).